A 238-amino-acid polypeptide reads, in one-letter code: Tritrans,polycis-undecaprenyl-diphosphate synthase (geranylgeranyl-diphosphate specific) (238 aa).

Residue Asp18 is part of the active site. A Mg(2+)-binding site is contributed by Asp18. Substrate contacts are provided by residues 19–22 and 64–66; these read GNRR and STE. Asn67 acts as the Proton acceptor in catalysis. Substrate is bound by residues Arg70, Arg187, and 193-195; that span reads RLS. Residue Glu206 coordinates Mg(2+).

This sequence belongs to the UPP synthase family. In terms of assembly, homodimer. Mg(2+) serves as cofactor.

It carries out the reaction geranylgeranyl diphosphate + 7 isopentenyl diphosphate = tri-trans,hepta-cis-undecaprenyl diphosphate + 7 diphosphate. Its function is as follows. Catalyzes the sequential condensation of isopentenyl diphosphate (IPP) with geranylgeranyl diphosphate (GGPP) to yield (2Z,6Z,10Z,14Z,18Z,22Z,26Z,30E,34E,38E)-undecaprenyl diphosphate (tritrans,heptacis-UPP). It is probably the precursor of glycosyl carrier lipids. The polypeptide is Tritrans,polycis-undecaprenyl-diphosphate synthase (geranylgeranyl-diphosphate specific) (Pyrobaculum aerophilum (strain ATCC 51768 / DSM 7523 / JCM 9630 / CIP 104966 / NBRC 100827 / IM2)).